Consider the following 196-residue polypeptide: Protein GrpE (196 aa).

The tract at residues 1–41 (MSSKEQKTPEGQAPEEIITEQHDDVEAVEPEVSAEQVDPRD) is disordered.

The protein belongs to the GrpE family. Homodimer.

Its subcellular location is the cytoplasm. In terms of biological role, participates actively in the response to hyperosmotic and heat shock by preventing the aggregation of stress-denatured proteins, in association with DnaK and GrpE. It is the nucleotide exchange factor for DnaK and may function as a thermosensor. Unfolded proteins bind initially to DnaJ; upon interaction with the DnaJ-bound protein, DnaK hydrolyzes its bound ATP, resulting in the formation of a stable complex. GrpE releases ADP from DnaK; ATP binding to DnaK triggers the release of the substrate protein, thus completing the reaction cycle. Several rounds of ATP-dependent interactions between DnaJ, DnaK and GrpE are required for fully efficient folding. The sequence is that of Protein GrpE from Klebsiella pneumoniae (strain 342).